The chain runs to 588 residues: Vicilin C72 (588 aa).

An N-terminal signal peptide occupies residues Met1 to Ala25. Disordered regions lie at residues Arg159–His183 and Pro460–Arg487. Acidic residues predominate over residues Glu163–Gln175. 2 Cupin type-1 domains span residues Phe182–Asp340 and Phe386–Asp566. The span at Phe465–Glu478 shows a compositional bias: acidic residues.

The protein belongs to the 7S seed storage protein family.

It localises to the vacuole. Its subcellular location is the aleurone grain. Seed storage protein. The chain is Vicilin C72 from Gossypium hirsutum (Upland cotton).